The following is a 313-amino-acid chain: 2-phosphoglycerate kinase (313 aa).

Residues Ser-8–Ser-95 form the ATP-cone domain.

The protein belongs to the 2-phosphoglycerate kinase family. It depends on a divalent metal cation as a cofactor.

It carries out the reaction (2R)-2-phosphoglycerate + ATP = (2R)-2,3-bisphosphoglycerate + ADP + H(+). Its pathway is thermoadapter biosynthesis; cyclic 2,3-diphosphoglycerate biosynthesis; cyclic 2,3-diphosphoglycerate from 2-phospho-D-glycerate: step 1/2. Catalyzes the phosphorylation of 2-phosphoglycerate to 2,3-diphosphoglycerate. Involved in the biosynthesis of cyclic 2,3-bisphosphoglycerate, a thermoprotectant. This is 2-phosphoglycerate kinase from Methanococcus maripaludis (strain C6 / ATCC BAA-1332).